The following is a 249-amino-acid chain: Orotidine 5'-phosphate decarboxylase (249 aa).

Residues Asp18, Lys40, 67–76 (DLKYHDIPNT), Thr127, Arg188, Gln197, Gly217, and Arg218 each bind substrate. Residue Lys69 is the Proton donor of the active site.

This sequence belongs to the OMP decarboxylase family. Type 1 subfamily. In terms of assembly, homodimer.

It catalyses the reaction orotidine 5'-phosphate + H(+) = UMP + CO2. It functions in the pathway pyrimidine metabolism; UMP biosynthesis via de novo pathway; UMP from orotate: step 2/2. Its function is as follows. Catalyzes the decarboxylation of orotidine 5'-monophosphate (OMP) to uridine 5'-monophosphate (UMP). This Baumannia cicadellinicola subsp. Homalodisca coagulata protein is Orotidine 5'-phosphate decarboxylase.